Consider the following 549-residue polypeptide: MTTASIRRGYHVIKTILHFGLDDLIPKHKKPWYFAIVRNSLFWVRNKHKTKSPAERLKLAMQDLGPVYIKLGQMLSTRRDLLDDEWAYQLAMLQDRVPPFDSALAREAIEAELGAPIATYFDDFNDTPLASASISQVHTATLKSNGKAVVLKVLRPNVEQQILADLQLMTQTANLLETLLGDGNRLRPAEVIEDYRTTILGELNLKLEALNAIKLRNNFLGSNSLYVPFVYEEHSYQRLMVMERIYGIPVSDTEALRAQGTNFKLLAERGVELFFTQVFRDNFFHADMHPGNIFISREHPDDPFYIGLDCGIMGTLTEVDKRYLAENFLAFFNRDYHRIAQLYIESGWVSEHTDIIAFEQAVKVVCEPMFNKPLDEISFGHVLLELFRTARHFDIVVQPQLVLLEKTLLYIEGLGRQLYPQLDLWQTAKPFLENWMSEQVGPKAMFNKVKSNAPFWADKLPEFPELIYDNLKLGRKLLGTQQQMLDKYLRYQQKSHKSNYLLITSAVLLICGTILFTQIVTLWPAYTCIGAGILIWAIGWRSRPKNRKF.

One can recognise a Protein kinase domain in the interval 123-501; that stretch reads DFNDTPLASA…QQKSHKSNYL (379 aa). Residues 129–137 and Lys-152 each bind ATP; that span reads LASASISQV. The active-site Proton acceptor is the Asp-287. 2 helical membrane passes run 498-518 and 519-539; these read SNYL…LFTQ and IVTL…WAIG.

The protein belongs to the ABC1 family. UbiB subfamily.

The protein resides in the cell inner membrane. The protein operates within cofactor biosynthesis; ubiquinone biosynthesis [regulation]. In terms of biological role, is probably a protein kinase regulator of UbiI activity which is involved in aerobic coenzyme Q (ubiquinone) biosynthesis. The chain is Probable protein kinase UbiB from Shewanella frigidimarina (strain NCIMB 400).